The primary structure comprises 75 residues: 8.9 kDa basic protein (75 aa).

The sequence is that of 8.9 kDa basic protein (P8.9) from Orgyia pseudotsugata (Douglas-fir tussock moth).